A 269-amino-acid polypeptide reads, in one-letter code: MEMO1 family protein TV1383 (269 aa).

This sequence belongs to the MEMO1 family.

The protein is MEMO1 family protein TV1383 of Thermoplasma volcanium (strain ATCC 51530 / DSM 4299 / JCM 9571 / NBRC 15438 / GSS1).